A 124-amino-acid chain; its full sequence is Fluoride-specific ion channel FluC (124 aa).

4 helical membrane-spanning segments follow: residues 1–21, 38–58, 69–89, and 97–117; these read MIPL…LRFA, TLAV…LFLV, GLIV…LDTV, and VALA…ATWA. Gly-76 and Thr-79 together coordinate Na(+).

This sequence belongs to the fluoride channel Fluc/FEX (TC 1.A.43) family.

The protein resides in the cell inner membrane. The catalysed reaction is fluoride(in) = fluoride(out). Na(+) is not transported, but it plays an essential structural role and its presence is essential for fluoride channel function. In terms of biological role, fluoride-specific ion channel. Important for reducing fluoride concentration in the cell, thus reducing its toxicity. The sequence is that of Fluoride-specific ion channel FluC from Pseudomonas fluorescens (strain ATCC BAA-477 / NRRL B-23932 / Pf-5).